The chain runs to 706 residues: Glycine--tRNA ligase beta subunit (706 aa).

This sequence belongs to the class-II aminoacyl-tRNA synthetase family. Tetramer of two alpha and two beta subunits.

Its subcellular location is the cytoplasm. The enzyme catalyses tRNA(Gly) + glycine + ATP = glycyl-tRNA(Gly) + AMP + diphosphate. The polypeptide is Glycine--tRNA ligase beta subunit (Hyphomonas neptunium (strain ATCC 15444)).